The chain runs to 383 residues: Putative transcription factor 282R (383 aa).

Belongs to the IIV-6 282R family.

Transcription activation. This Acheta domesticus (House cricket) protein is Putative transcription factor 282R.